The sequence spans 1067 residues: Mediator of RNA polymerase II transcription subunit 5 (1067 aa).

It belongs to the Mediator complex subunit 5 family. In terms of assembly, component of the Mediator complex.

Its subcellular location is the nucleus. Component of the Mediator complex, a coactivator involved in the regulated transcription of nearly all RNA polymerase II-dependent genes. Mediator functions as a bridge to convey information from gene-specific regulatory proteins to the basal RNA polymerase II transcription machinery. Mediator is recruited to promoters by direct interactions with regulatory proteins and serves as a scaffold for the assembly of a functional preinitiation complex with RNA polymerase II and the general transcription factors. The chain is Mediator of RNA polymerase II transcription subunit 5 (NUT1) from Kluyveromyces lactis (strain ATCC 8585 / CBS 2359 / DSM 70799 / NBRC 1267 / NRRL Y-1140 / WM37) (Yeast).